The chain runs to 78 residues: DNA-directed RNA polymerase subunit Rpo5 (78 aa).

It belongs to the archaeal Rpo5/eukaryotic RPB5 RNA polymerase subunit family. Part of the RNA polymerase complex.

It localises to the cytoplasm. The catalysed reaction is RNA(n) + a ribonucleoside 5'-triphosphate = RNA(n+1) + diphosphate. DNA-dependent RNA polymerase (RNAP) catalyzes the transcription of DNA into RNA using the four ribonucleoside triphosphates as substrates. The protein is DNA-directed RNA polymerase subunit Rpo5 of Methanocaldococcus jannaschii (strain ATCC 43067 / DSM 2661 / JAL-1 / JCM 10045 / NBRC 100440) (Methanococcus jannaschii).